The chain runs to 357 residues: Glutamine synthetase cytosolic isozyme 1-2 (357 aa).

The GS beta-grasp domain occupies 19-99; that stretch reads IIAEYIWVGG…VMCDCYTPQG (81 aa). The GS catalytic domain maps to 106–357; it reads KRHSAAKIFS…AETTLLWKQN (252 aa).

The protein belongs to the glutamine synthetase family. In terms of assembly, homooctamer. As to expression, expressed in roots and at lower levels in leaf blades and spikelets (rice flower).

Its subcellular location is the cytoplasm. The enzyme catalyses L-glutamate + NH4(+) + ATP = L-glutamine + ADP + phosphate + H(+). In terms of biological role, high-affinity glutamine synthetase involved in ammonium assimilation. Plays an important role in the primary assimilation of ammonium taken up by roots. Plays a role in maintaining nitrogen metabolic balance during ammonium assimilation, thus controlling plant growth and development. Reassimilates ammonium generated during lignification within developing tillers, which is probably required for the outgrowth of axillary buds. Required for nitrogen-dependent biosynthesis of cytokinin. Active cytokinin in axillary bud meristem is required for axillary bud outgrowth and necessary for tillering. This chain is Glutamine synthetase cytosolic isozyme 1-2, found in Oryza sativa subsp. japonica (Rice).